A 296-amino-acid polypeptide reads, in one-letter code: GTP cyclohydrolase FolE2 (296 aa).

This sequence belongs to the GTP cyclohydrolase IV family.

It carries out the reaction GTP + H2O = 7,8-dihydroneopterin 3'-triphosphate + formate + H(+). It participates in cofactor biosynthesis; 7,8-dihydroneopterin triphosphate biosynthesis; 7,8-dihydroneopterin triphosphate from GTP: step 1/1. Converts GTP to 7,8-dihydroneopterin triphosphate. This Ectopseudomonas mendocina (strain ymp) (Pseudomonas mendocina) protein is GTP cyclohydrolase FolE2.